A 429-amino-acid chain; its full sequence is Acetyltransferase pyr8 (429 aa).

The next 9 membrane-spanning stretches (helical) occupy residues 12 to 32, 39 to 56, 69 to 89, 154 to 174, 221 to 241, 300 to 320, 324 to 344, 365 to 385, and 409 to 429; these read IAQELALYLAFTVPTAFVIIT, LRLAWTPCLLYILYRFSL, GVAAGQATVAALQCLNLLLIT, YVLRESAIIIWQYLLLDLIHM, VCLNIVSRIYCLVLVVLRISA, IFFTFFTSAVLHLACDAILGI, GSGAMPFFCVVPLAIMFEDGV, LVGFLWVGSWMYATSPWYLYP, and VAQKVLLVYGVVLYWAIGGEI.

This sequence belongs to the wax synthase family.

The protein localises to the membrane. Its pathway is secondary metabolite biosynthesis; terpenoid biosynthesis. In terms of biological role, acetyltransferase; part of the gene cluster that mediates the biosynthesis of pyripyropene A, a specific human acyl-coenzyme A:cholesterol acyltransferase 2 inhibitor. The first step of the pathway is the synthesis of nicotinyl-CoA from nicotinic acid by the nicotinic acid-CoA ligase pyr1. Nicotinyl-CoA is then a substrate of polyketide synthase pyr2 to produce 4-hydroxy-6-(3-pyridinyl)-2H-pyran-2-one (HPPO) which is further prenylated by the polyprenyl transferase pyr6 to yield farnesyl-HPPO. The next steps consist of an epoxidation of farnesyl-HPPO to epoxyfarnesyl-HPPO by FAD-dependent monooxygenase pyr5 and a cyclization of the terpenoid portion by the terpene cyclase pyr4 to yield deacetyl-pyripyropene E. The 2 cytochrome P450 monooxygenases pyr3 and pyr9, and the 2 acetyltransferases pyr7 and pyr8 are involved in the conversion of deacetyl-pyripyropene E into pyripyropene A through several cycles of oxidation and acetylation steps. Pyr7 acetylates deacetyl-pyripyropene E to pyripyropene E which is oxidized to 11-deacetyl-pyripyropene O by pyr3, which is in turn acetylated into pyripyropene O by pyr8. Pyripyropene O is then oxidized to deacetyl-pyripyropene A by pyr9. Deacetyl-pyripyropene A is finally acetylated to pyripyropene A by pyr8. This Aspergillus fumigatus (strain ATCC MYA-4609 / CBS 101355 / FGSC A1100 / Af293) (Neosartorya fumigata) protein is Acetyltransferase pyr8.